We begin with the raw amino-acid sequence, 393 residues long: NAD(P)H-quinone oxidoreductase subunit H, chloroplastic (393 aa).

Belongs to the complex I 49 kDa subunit family. In terms of assembly, NDH is composed of at least 16 different subunits, 5 of which are encoded in the nucleus.

The protein localises to the plastid. The protein resides in the chloroplast thylakoid membrane. The enzyme catalyses a plastoquinone + NADH + (n+1) H(+)(in) = a plastoquinol + NAD(+) + n H(+)(out). It catalyses the reaction a plastoquinone + NADPH + (n+1) H(+)(in) = a plastoquinol + NADP(+) + n H(+)(out). Functionally, NDH shuttles electrons from NAD(P)H:plastoquinone, via FMN and iron-sulfur (Fe-S) centers, to quinones in the photosynthetic chain and possibly in a chloroplast respiratory chain. The immediate electron acceptor for the enzyme in this species is believed to be plastoquinone. Couples the redox reaction to proton translocation, and thus conserves the redox energy in a proton gradient. This is NAD(P)H-quinone oxidoreductase subunit H, chloroplastic from Crucihimalaya wallichii (Rock-cress).